A 329-amino-acid chain; its full sequence is Putative methylthioribose-1-phosphate isomerase (329 aa).

Substrate-binding positions include 50-52 (RGA), Arg-84, and Gln-182. Asp-223 serves as the catalytic Proton donor. Residue 233-234 (NK) coordinates substrate.

It belongs to the eIF-2B alpha/beta/delta subunits family. MtnA subfamily.

It catalyses the reaction 5-(methylsulfanyl)-alpha-D-ribose 1-phosphate = 5-(methylsulfanyl)-D-ribulose 1-phosphate. Its function is as follows. Catalyzes the interconversion of methylthioribose-1-phosphate (MTR-1-P) into methylthioribulose-1-phosphate (MTRu-1-P). In Methanocaldococcus jannaschii (strain ATCC 43067 / DSM 2661 / JAL-1 / JCM 10045 / NBRC 100440) (Methanococcus jannaschii), this protein is Putative methylthioribose-1-phosphate isomerase.